The sequence spans 507 residues: Dolichyl pyrophosphate Man9GlcNAc2 alpha-1,3-glucosyltransferase (507 aa).

The Cytoplasmic segment spans residues 1–3; sequence MEK. The helical transmembrane segment at 4–24 threads the bilayer; that stretch reads WSLMTITVLLALTVRWTVSLG. The Lumenal portion of the chain corresponds to 25–114; the sequence is SYSGAGKPPM…SQSHKLFMRT (90 aa). Asn-59 is a glycosylation site (N-linked (GlcNAc...) asparagine). The helical transmembrane segment at 115–135 threads the bilayer; sequence TVFVADLLIYIPAVILYCCSL. Over 136-143 the chain is Cytoplasmic; that stretch reads KETSTKKK. Residues 144–164 traverse the membrane as a helical segment; sequence VSSALCILLYPGLILIDHGHF. The Lumenal portion of the chain corresponds to 165–168; that stretch reads QYNS. Residues 169 to 189 form a helical membrane-spanning segment; sequence VSLGFALWGVLCLSYDWDLLG. Residues 190–226 are Cytoplasmic-facing; that stretch reads SAAFCLALNYKQMELYHSLPFFCYLLGKCFKKGLKGK. The chain crosses the membrane as a helical span at residues 227–247; the sequence is GLLLLIKLAGTVVASFAVCWL. Residues 248-297 lie on the Lumenal side of the membrane; that stretch reads PFCTDVEQIMQVLRRLFPIDRGLFEDKVANIWCSLSVLIKIKNVVSPQTQ. Residues 298–318 form a helical membrane-spanning segment; the sequence is LKLSFAVTFLSLLPTCIKLTV. Residues 319 to 338 are Cytoplasmic-facing; the sequence is QPSLRGFKLTLVSCALSFFL. A helical transmembrane segment spans residues 339 to 359; it reads FSFQVHEKSILLVSVPVCLII. Over 360–361 the chain is Lumenal; the sequence is NE. The chain crosses the membrane as a helical span at residues 362–382; the sequence is VPFMATWFLLVSTFSMLPLLL. Residues 383–387 are Cytoplasmic-facing; it reads KDGLL. A helical transmembrane segment spans residues 388 to 408; that stretch reads LPYAVTTLAFLSACVASFAIF. The Lumenal segment spans residues 409–441; that stretch reads EKTSAKDLQLKPFSQSLRGYVSWFKLFPKIVRS. A helical membrane pass occupies residues 442 to 462; it reads LFLLSVTLMGVLSVMSAAVHP. Residues 463-473 are Cytoplasmic-facing; the sequence is PQRFPDLFPVS. A helical membrane pass occupies residues 474–494; sequence VSSISCLHFLFFLVYFNVIIL. The Lumenal portion of the chain corresponds to 495 to 507; sequence WDSKNSRNQKKVS.

It belongs to the ALG6/ALG8 glucosyltransferase family.

The protein localises to the endoplasmic reticulum membrane. It carries out the reaction an alpha-D-Man-(1-&gt;2)-alpha-D-Man-(1-&gt;2)-alpha-D-Man-(1-&gt;3)-[alpha-D-Man-(1-&gt;2)-alpha-D-Man-(1-&gt;3)-[alpha-D-Man-(1-&gt;2)-alpha-D-Man-(1-&gt;6)]-alpha-D-Man-(1-&gt;6)]-beta-D-Man-(1-&gt;4)-beta-D-GlcNAc-(1-&gt;4)-alpha-D-GlcNAc-diphospho-di-trans,poly-cis-dolichol + a di-trans,poly-cis-dolichyl beta-D-glucosyl phosphate = an alpha-D-Glc-(1-&gt;3)-alpha-D-Man-(1-&gt;2)-alpha-D-Man-(1-&gt;2)-alpha-D-Man-(1-&gt;3)-[alpha-D-Man-(1-&gt;2)-alpha-D-Man-(1-&gt;3)-[alpha-D-Man-(1-&gt;2)-alpha-D-Man-(1-&gt;6)]-alpha-D-Man-(1-&gt;6)]-beta-D-Man-(1-&gt;4)-beta-D-GlcNAc-(1-&gt;4)-alpha-D-GlcNAc-diphospho-di-trans,poly-cis-dolichol + a di-trans,poly-cis-dolichyl phosphate + H(+). It functions in the pathway protein modification; protein glycosylation. Functionally, dolichyl pyrophosphate Man9GlcNAc2 alpha-1,3-glucosyltransferase that operates in the biosynthetic pathway of dolichol-linked oligosaccharides, the glycan precursors employed in protein asparagine (N)-glycosylation. The assembly of dolichol-linked oligosaccharides begins on the cytosolic side of the endoplasmic reticulum membrane and finishes in its lumen. The sequential addition of sugars to dolichol pyrophosphate produces dolichol-linked oligosaccharides containing fourteen sugars, including two GlcNAcs, nine mannoses and three glucoses. Once assembled, the oligosaccharide is transferred from the lipid to nascent proteins by oligosaccharyltransferases. In the lumen of the endoplasmic reticulum, adds the first glucose residue from dolichyl phosphate glucose (Dol-P-Glc) onto the lipid-linked oligosaccharide intermediate Man(9)GlcNAc(2)-PP-Dol to produce Glc(1)Man(9)GlcNAc(2)-PP-Dol. Glc(1)Man(9)GlcNAc(2)-PP-Dol is a substrate for ALG8, the following enzyme in the biosynthetic pathway. The polypeptide is Dolichyl pyrophosphate Man9GlcNAc2 alpha-1,3-glucosyltransferase (Gallus gallus (Chicken)).